The sequence spans 480 residues: Cysteine--tRNA ligase (480 aa).

Residue cysteine 27 coordinates Zn(2+). The 'HIGH' region signature appears at 29-39 (PTVYNYAHIGN). Zn(2+) contacts are provided by cysteine 221, histidine 246, and glutamate 250. A 'KMSKS' region motif is present at residues 278-282 (KMSKS). Lysine 281 serves as a coordination point for ATP.

This sequence belongs to the class-I aminoacyl-tRNA synthetase family. Monomer. It depends on Zn(2+) as a cofactor.

It is found in the cytoplasm. It carries out the reaction tRNA(Cys) + L-cysteine + ATP = L-cysteinyl-tRNA(Cys) + AMP + diphosphate. This Borrelia garinii subsp. bavariensis (strain ATCC BAA-2496 / DSM 23469 / PBi) (Borreliella bavariensis) protein is Cysteine--tRNA ligase.